The primary structure comprises 210 residues: Uracil phosphoribosyltransferase (210 aa).

Residues Arg80, Arg105, and Asp132–Ser140 contribute to the 5-phospho-alpha-D-ribose 1-diphosphate site. Uracil is bound by residues Ile195 and Gly200–Ala202. Residue Asp201 participates in 5-phospho-alpha-D-ribose 1-diphosphate binding.

Belongs to the UPRTase family. Requires Mg(2+) as cofactor.

The enzyme catalyses UMP + diphosphate = 5-phospho-alpha-D-ribose 1-diphosphate + uracil. The protein operates within pyrimidine metabolism; UMP biosynthesis via salvage pathway; UMP from uracil: step 1/1. Allosterically activated by GTP. Catalyzes the conversion of uracil and 5-phospho-alpha-D-ribose 1-diphosphate (PRPP) to UMP and diphosphate. This Deinococcus radiodurans (strain ATCC 13939 / DSM 20539 / JCM 16871 / CCUG 27074 / LMG 4051 / NBRC 15346 / NCIMB 9279 / VKM B-1422 / R1) protein is Uracil phosphoribosyltransferase.